We begin with the raw amino-acid sequence, 691 residues long: Putative calcium up-regulated protein I (691 aa).

The Ricin B-type lectin domain occupies 47–174 (SNCYLKEKPQ…NYTSQIWTYN (128 aa)).

The protein belongs to the cup family.

The chain is Putative calcium up-regulated protein I (cupI) from Dictyostelium discoideum (Social amoeba).